Here is a 460-residue protein sequence, read N- to C-terminus: Muscarinic acetylcholine receptor M1 (460 aa).

Residues 1–22 (MNTSAPPAVSPNITVLAPGKGP) are Extracellular-facing. Residues Asn-2 and Asn-12 are each glycosylated (N-linked (GlcNAc...) asparagine). The chain crosses the membrane as a helical span at residues 23–48 (WQVAFIGITTGLLSLATVTGNLLVLI). Topologically, residues 49–62 (SFKVNTELKTVNNY) are cytoplasmic. Residues 63-84 (FLLSLACADLIIGTFSMNLYTT) traverse the membrane as a helical segment. At 85 to 95 (YLLMGHWALGT) the chain is on the extracellular side. A helical membrane pass occupies residues 96-121 (LACDLWLALDYVASNASVMNLLLISF). Cys-98 and Cys-178 are disulfide-bonded. Over 122–142 (DRYFSVTRPLSYRAKRTPRRA) the chain is Cytoplasmic. Residues 143 to 164 (ALMIGLAWLVSFVLWAPAILFW) form a helical membrane-spanning segment. At 165-185 (QYLVGERTVLAGQCYIQFLSQ) the chain is on the extracellular side. Residues 186–209 (PIITFGTAMAAFYLPVTVMCTLYW) form a helical membrane-spanning segment. Over 210 to 366 (RIYRETESRA…LVKEKKAART (157 aa)) the chain is Cytoplasmic. 3 disordered regions span residues 225-256 (LQGS…GTPP), 274-297 (WKEE…EEPG), and 310-351 (EAQA…QLAK). Thr-230 is modified (phosphothreonine). Over residues 238 to 247 (SSSSERSQPG) the composition is skewed to low complexity. The segment covering 328–343 (RPTKKGRDRAGKGQKP) has biased composition (basic residues). A helical transmembrane segment spans residues 367 to 390 (LSAILLAFILTWTPYNIMVLVSTF). The Extracellular portion of the chain corresponds to 391–397 (CKDCVPE). A helical transmembrane segment spans residues 398–420 (TLWELGYWLCYVNSTINPMCYAL). Residues 421-460 (CNKAFRDTFRLLLLCRWDKRRWRKIPKRPGSVHRTPSRQC) lie on the Cytoplasmic side of the membrane. Thr-428 bears the Phosphothreonine mark. Ser-451 carries the phosphoserine modification. Thr-455 is subject to Phosphothreonine. Ser-457 carries the post-translational modification Phosphoserine.

The protein belongs to the G-protein coupled receptor 1 family. Muscarinic acetylcholine receptor subfamily. CHRM1 sub-subfamily. As to quaternary structure, interacts with GPRASP2. Interacts with TMEM147.

It is found in the cell membrane. The protein localises to the postsynaptic cell membrane. Functionally, the muscarinic acetylcholine receptor mediates various cellular responses, including inhibition of adenylate cyclase, breakdown of phosphoinositides and modulation of potassium channels through the action of G proteins. Primary transducing effect is Pi turnover. The chain is Muscarinic acetylcholine receptor M1 (CHRM1) from Pongo abelii (Sumatran orangutan).